A 228-amino-acid chain; its full sequence is Glyceraldehyde 3-phosphate phosphatase (228 aa).

The protein belongs to the HAD-like hydrolase superfamily. Requires Mg(2+) as cofactor.

In terms of biological role, catalyzes the dephosphorylation of D,L-glyceraldehyde 3-phosphate in vitro. In Methanocaldococcus jannaschii (strain ATCC 43067 / DSM 2661 / JAL-1 / JCM 10045 / NBRC 100440) (Methanococcus jannaschii), this protein is Glyceraldehyde 3-phosphate phosphatase.